The primary structure comprises 397 residues: Acylalkylpyrone synthase csyB (397 aa).

CoA is bound by residues lysine 50 and 50–57 (KMLEINRK). Cysteine 155 serves as the catalytic Nucleophile. 214-215 (GD) contributes to the substrate binding site. CoA contacts are provided by residues isoleucine 267, glycine 312, 312-315 (GGYA), tyrosine 314, and alanine 315. The active site involves histidine 377.

Belongs to the thiolase-like superfamily. Chalcone/stilbene synthases family. As to quaternary structure, homodimer.

In terms of biological role, acylalkylpyrone synthase that catalyzes not only the polyketide chain elongation but also the one-pot condensation of two beta-ketoacyl units to produce the 3-acyl-4-hydroxy-6-alkyl-alpha-pyrone (AcAP) scaffold, a precursor of csypyrone B. The enzyme reaction is initiated by the loading of acetoacetyl-CoA onto Cys-155, and subsequent thioester bond cleavage by the nucleophilic water generates the beta-keto acid intermediate, which is placed within a pocket. The second beta-ketoacyl unit is then produced by polyketide chain elongation of fatty acyl-CoA with one molecule of malonyl-CoA, and the condensation with the beta-ketoacid generates the final products. Csypyrone B1 is the major product and contains a propanoic acid side-chain, whereas csypyrones B2 and B3 are minor compounds that contain butyric or pentanoic acid side-chains, respectively. This Aspergillus oryzae (strain ATCC 42149 / RIB 40) (Yellow koji mold) protein is Acylalkylpyrone synthase csyB.